Consider the following 254-residue polypeptide: Short-chain dehydrogenase/reductase SDRA (254 aa).

NADP(+) is bound at residue 15–39; that stretch reads IVTASTQGIGFGITERFGLEGASVV. Ser-146 lines the substrate pocket. The active-site Proton acceptor is Tyr-159. A Microbody targeting signal motif is present at residues 252-254; it reads SRL.

This sequence belongs to the short-chain dehydrogenases/reductases (SDR) family.

Its subcellular location is the peroxisome. Involved with IBR3 and IBR10 in the peroxisomal beta-oxidation of indole-3-butyric acid (IBA) to form indole-3-acetic acid (IAA), a biologically active auxin. May be responsible for catalyzing the dehydrogenation step in the conversion of IBA. May be involved in the peroxisomal activation of 2,4-dichlorophenoxybutyric acid (2,4-DB), a precursor of active auxins that inhibit root growth. This is Short-chain dehydrogenase/reductase SDRA from Arabidopsis thaliana (Mouse-ear cress).